A 154-amino-acid chain; its full sequence is Protein X (154 aa).

Residues 68-117 (PCALRFTSARRMETTVNAHQILPKVLHKRTLGLSAMSTTDLEAYFKDCLF) form a mitochondrial targeting sequence region.

It belongs to the orthohepadnavirus protein X family. May form homodimer. May interact with host CEBPA, CFLAR, CREB1, DDB1, E4F1, HBXIP, HSPD1/HSP60, NFKBIA, POLR2E and SMAD4. Interacts with host SMC5-SMC6 complex and induces its degradation. Interacts with host TRPC4AP; leading to prevent ubiquitination of TRPC4AP. Interacts with host PLSCR1; this interaction promotes ubiquitination and degradation of HBx and impairs HBx-mediated cell proliferation. A fraction may be phosphorylated in insect cells and HepG2 cells, a human hepatoblastoma cell line. Phosphorylated in vitro by host protein kinase C or mitogen-activated protein kinase. N-acetylated in insect cells.

The protein resides in the host cytoplasm. The protein localises to the host nucleus. It localises to the host mitochondrion. Its function is as follows. Multifunctional protein that plays a role in silencing host antiviral defenses and promoting viral transcription. Does not seem to be essential for HBV infection. May be directly involved in development of cirrhosis and liver cancer (hepatocellular carcinoma). Most of cytosolic activities involve modulation of cytosolic calcium. The effect on apoptosis is controversial depending on the cell types in which the studies have been conducted. May induce apoptosis by localizing in mitochondria and causing loss of mitochondrial membrane potential. May also modulate apoptosis by binding host CFLAR, a key regulator of the death-inducing signaling complex (DISC). Promotes viral transcription by using the host E3 ubiquitin ligase DDB1 to target the SMC5-SMC6 complex to proteasomal degradation. This host complex would otherwise bind to viral episomal DNA, and prevents its transcription. Moderately stimulates transcription of many different viral and cellular transcription elements. Promoters and enhancers stimulated by HBx contain DNA binding sites for NF-kappa-B, AP-1, AP-2, c-EBP, ATF/CREB, or the calcium-activated factor NF-AT. The protein is Protein X of Hepatitis B virus genotype E subtype ayw4 (isolate Kou) (HBV-E).